A 70-amino-acid chain; its full sequence is uncharacterized protein (70 aa).

This is an uncharacterized protein from Vaccinia virus (strain Copenhagen) (VACV).